A 662-amino-acid polypeptide reads, in one-letter code: Histone-lysine N-methyltransferase SET9 (662 aa).

One can recognise an SET domain in the interval 114 to 228 (CPFEVTTTNR…EGDEITVSYG (115 aa)). 2 disordered regions span residues 252–418 (WAPM…DEHH) and 627–662 (ESIR…RKTM). A compositionally biased stretch (acidic residues) spans 260–271 (DSDDEDMEEAES). Low complexity predominate over residues 279-289 (ATSSGTATSGG). Basic and acidic residues predominate over residues 323–333 (RASDHLREATL). Composition is skewed to polar residues over residues 356–370 (ANIN…QDIR), 382–395 (LDET…TPQS), and 402–411 (PKSSHSTDAT). Positions 627–640 (ESIRERFSTPRSGR) are enriched in basic and acidic residues. The span at 653-662 (RKRRRVRKTM) shows a compositional bias: basic residues.

This sequence belongs to the class V-like SAM-binding methyltransferase superfamily. Histone-lysine methyltransferase family. Suvar4-20 subfamily.

Its subcellular location is the nucleus. It is found in the chromosome. The catalysed reaction is L-lysyl(20)-[histone H4] + 3 S-adenosyl-L-methionine = N(6),N(6),N(6)-trimethyl-L-lysyl(20)-[histone H4] + 3 S-adenosyl-L-homocysteine + 3 H(+). Its function is as follows. Histone methyltransferase that trimethylates 'Lys-20' of histone H4 to form H4K20me3. The chain is Histone-lysine N-methyltransferase SET9 (SET9) from Phaeosphaeria nodorum (strain SN15 / ATCC MYA-4574 / FGSC 10173) (Glume blotch fungus).